A 152-amino-acid polypeptide reads, in one-letter code: Sec-independent protein translocase protein TatB (152 aa).

The helical transmembrane segment at 1-21 (MFGISFSELLLVGLVALLVLG) threads the bilayer. A compositionally biased stretch (low complexity) spans 98 to 115 (HAPGAATVAEAPPASEVP). Residues 98-152 (HAPGAATVAEAPPASEVPAPLPSTPAPAPTAEPAAPVATPATTAPHDSTLPPRAP) are disordered. The span at 116 to 127 (APLPSTPAPAPT) shows a compositional bias: pro residues. A compositionally biased stretch (low complexity) spans 128 to 142 (AEPAAPVATPATTAP).

The protein belongs to the TatB family. In terms of assembly, the Tat system comprises two distinct complexes: a TatABC complex, containing multiple copies of TatA, TatB and TatC subunits, and a separate TatA complex, containing only TatA subunits. Substrates initially bind to the TatABC complex, which probably triggers association of the separate TatA complex to form the active translocon.

It is found in the cell inner membrane. Its function is as follows. Part of the twin-arginine translocation (Tat) system that transports large folded proteins containing a characteristic twin-arginine motif in their signal peptide across membranes. Together with TatC, TatB is part of a receptor directly interacting with Tat signal peptides. TatB may form an oligomeric binding site that transiently accommodates folded Tat precursor proteins before their translocation. The sequence is that of Sec-independent protein translocase protein TatB from Pseudomonas fluorescens (strain ATCC BAA-477 / NRRL B-23932 / Pf-5).